We begin with the raw amino-acid sequence, 250 residues long: Ribonuclease PH (250 aa).

Phosphate contacts are provided by residues R87 and 125–127 (GTR).

This sequence belongs to the RNase PH family. As to quaternary structure, homohexameric ring arranged as a trimer of dimers.

It carries out the reaction tRNA(n+1) + phosphate = tRNA(n) + a ribonucleoside 5'-diphosphate. Its function is as follows. Phosphorolytic 3'-5' exoribonuclease that plays an important role in tRNA 3'-end maturation. Removes nucleotide residues following the 3'-CCA terminus of tRNAs; can also add nucleotides to the ends of RNA molecules by using nucleoside diphosphates as substrates, but this may not be physiologically important. Probably plays a role in initiation of 16S rRNA degradation (leading to ribosome degradation) during starvation. The sequence is that of Ribonuclease PH from Moorella thermoacetica (strain ATCC 39073 / JCM 9320).